The following is a 285-amino-acid chain: Methionine aminopeptidase 2 (285 aa).

Residue His-114 coordinates substrate. A divalent metal cation is bound by residues Asp-131, Asp-142, and His-205. Substrate is bound at residue His-212. A divalent metal cation contacts are provided by Glu-238 and Glu-269.

Monomer. Co(2+) serves as cofactor. Requires Zn(2+) as cofactor. It depends on Mn(2+) as a cofactor. Fe(2+) is required as a cofactor.

The enzyme catalyses Release of N-terminal amino acids, preferentially methionine, from peptides and arylamides.. Inhibited by bengamide derivatives and by various metalloform-selective inhibitors. Its function is as follows. Removes the N-terminal methionine from nascent proteins. The N-terminal methionine is often cleaved when the second residue in the primary sequence is small and uncharged (Met-Ala-, Cys, Gly, Pro, Ser, Thr, or Val). Requires deformylation of the N(alpha)-formylated initiator methionine before it can be hydrolyzed. This Mycobacterium tuberculosis (strain ATCC 25618 / H37Rv) protein is Methionine aminopeptidase 2.